The chain runs to 445 residues: KICSTOR subunit 2 (445 aa).

Belongs to the KICS2 family. As to quaternary structure, part of the KICSTOR complex composed of KPTN, ITFG2, KICS2 and SZT2. SZT2 probably serves as a link between the other three proteins in the KICSTOR complex and may mediate the direct interaction with the GATOR complex via GATOR1. The KICSTOR complex interacts directly with the GATOR1 complex and most probably indirectly with the GATOR2 complex in an amino acid-independent manner.

It localises to the lysosome membrane. As part of the KICSTOR complex functions in the amino acid-sensing branch of the TORC1 signaling pathway. Recruits, in an amino acid-independent manner, the GATOR1 complex to the lysosomal membranes and allows its interaction with GATOR2 and the RAG GTPases. Functions upstream of the RAG GTPases and is required to negatively regulate mTORC1 signaling in absence of amino acids. In absence of the KICSTOR complex mTORC1 is constitutively localized to the lysosome and activated. The KICSTOR complex is also probably involved in the regulation of mTORC1 by glucose. This chain is KICSTOR subunit 2, found in Mus musculus (Mouse).